An 85-amino-acid chain; its full sequence is Large ribosomal subunit protein bL27 (85 aa).

The protein belongs to the bacterial ribosomal protein bL27 family.

This chain is Large ribosomal subunit protein bL27, found in Mycobacteroides abscessus (strain ATCC 19977 / DSM 44196 / CCUG 20993 / CIP 104536 / JCM 13569 / NCTC 13031 / TMC 1543 / L948) (Mycobacterium abscessus).